Consider the following 390-residue polypeptide: Probable purine permease 18 (390 aa).

A compositionally biased stretch (polar residues) spans 1–14 (MEMTEASKQTTAEG). The tract at residues 1–23 (MEMTEASKQTTAEGSANPEPDQI) is disordered. At serine 25 the chain carries Phosphoserine. Helical transmembrane passes span 39–59 (ISVS…MLLL), 81–101 (WLQA…FFIF), 120–140 (LILL…LFAL), 148–168 (GVFT…AAII), 176–196 (WIIL…PEFG), 211–231 (WLTF…QLCF), 250–270 (VIEM…VGLF), 297–317 (IGLA…VLYV), 324–344 (VVHM…FDFM), and 348–368 (FSWP…SYFY).

This sequence belongs to the purine permeases (TC 2.A.7.14) family.

The protein resides in the membrane. The sequence is that of Probable purine permease 18 (PUP18) from Arabidopsis thaliana (Mouse-ear cress).